The sequence spans 584 residues: 4-hydroxybenzoate decarboxylase subunit C (584 aa).

Belongs to the UbiD family. Component of the decarboxylase complex composed of the subunits B and C (Potential). The subunit D usually found in other organisms seems to be absent.

It catalyses the reaction 4-hydroxybenzoate + H(+) = phenol + CO2. The enzyme activity is enhanced by Mg(2+), Fe(2+), Mn(2+) and Ca(2+). No stimulation is observed with Cu(2+) and Zn(2+). Catalyzes the reversible decarboxylation of 4-hydroxybenzoate. In Chlamydia pneumoniae (Chlamydophila pneumoniae), this protein is 4-hydroxybenzoate decarboxylase subunit C.